We begin with the raw amino-acid sequence, 177 residues long: Peptidoglycan-associated lipoprotein (177 aa).

An N-terminal signal peptide occupies residues 1–32 (MSRTNISALSPMQKLARNPAVIAMTLALALAG). The N-palmitoyl cysteine moiety is linked to residue C33. Residue C33 is the site of S-diacylglycerol cysteine attachment. Positions 59–176 (QQDFTVNVGD…RAVTVLGGAG (118 aa)) constitute an OmpA-like domain.

The protein belongs to the Pal lipoprotein family. The Tol-Pal system is composed of five core proteins: the inner membrane proteins TolA, TolQ and TolR, the periplasmic protein TolB and the outer membrane protein Pal. They form a network linking the inner and outer membranes and the peptidoglycan layer.

The protein resides in the cell outer membrane. In terms of biological role, part of the Tol-Pal system, which plays a role in outer membrane invagination during cell division and is important for maintaining outer membrane integrity. The sequence is that of Peptidoglycan-associated lipoprotein from Agrobacterium fabrum (strain C58 / ATCC 33970) (Agrobacterium tumefaciens (strain C58)).